A 4910-amino-acid chain; its full sequence is Midasin (4910 aa).

AAA-ATPase protomer regions lie at residues 305–528 and 636–975; these read IQNS…DILF and MEQI…TDII. ATP-binding positions include 315–322 and 653–660; these read GKAGSGKT and GETGTGKT. The interval 695–803 is interaction with RIX1; it reads VNSKTVAVPI…KKFEAQSSSI (109 aa). T1026 carries the phosphothreonine modification. AAA-ATPase protomer regions lie at residues 1054–1280, 1345–1624, 1732–1985, and 2036–2286; these read HYII…WALR, KGMR…VEFI, RVVR…QLLI, and VYES…DELH. Residues 1083–1090, 1368–1375, 1747–1754, and 2054–2061 contribute to the ATP site; these read GPTSSGKT, GETGCGKT, GSPGVGKT, and GPSNSGKT. Positions 2372–4075 are linker; the sequence is EVGKWANNVL…DGEGAQNNNK (1704 aa). At S2971 the chain carries Phosphoserine. Disordered stretches follow at residues 4045–4547, 4555–4574, and 4579–4600; these read SPQP…EKMD, SDIDAHDANNDVDSKKSGFI, and SEEDFENELSNEHFSADQEDDS. The span at 4078 to 4088 shows a compositional bias: acidic residues; sequence EQDEDLTEDAQ. Over residues 4089 to 4098 the composition is skewed to basic and acidic residues; it reads NENKEQQDKD. Residues 4099–4154 are compositionally biased toward acidic residues; the sequence is ERDDENEDDAVEMEGDMAGELEDLSNGEENDDEDTDSEEEELDEEIDDLNEDDPNA. Residues 4155-4174 are compositionally biased toward basic and acidic residues; that stretch reads IDDKMWDDKASDNSKEKDTD. Composition is skewed to acidic residues over residues 4202-4244, 4251-4274, and 4288-4358; these read GDED…EDLE, ETLDLPEDMNLDSEHEESDEDVDM, and GNED…EEEL. Residue S4353 is modified to Phosphoserine. Residues 4359–4372 show a composition bias toward basic and acidic residues; the sequence is KQDAAMEENKEKGG. Position 4388 is a phosphothreonine (T4388). Basic and acidic residues-rich tracts occupy residues 4435–4447 and 4481–4495; these read DVTKNNEESREEA and LEKNNERPDEFEHVE. Positions 4498–4516 are enriched in polar residues; the sequence is NTETDTQALGSATQDQLQT. The span at 4517–4531 shows a compositional bias: acidic residues; it reads IDEDMAIDDDREEQE. The residue at position 4555 (S4555) is a Phosphoserine. Positions 4557–4570 are enriched in basic and acidic residues; that stretch reads IDAHDANNDVDSKK. One can recognise a VWFA domain in the interval 4704-4899; the sequence is QIMIALDDSK…SELPEMLSLI (196 aa).

It belongs to the midasin family. As to quaternary structure, associates with pre-60S ribosomes in the nucleoplasm. Interacts (via its hexameric AAA ATPase ring) with the RIX1 complex (via RIX1); this interaction is crucial for recruitment of MDN1 to the pre-ribosomal particle. Interacts (via VWFA/MIDAS domain) with YTM1 (via UBL domain). Interacts (via VWFA/MIDAS domain) with RSA4 (via UBL domain).

The protein localises to the nucleus. It is found in the nucleolus. It localises to the nucleoplasm. Functionally, nuclear chaperone required for maturation and nuclear export of pre-60S ribosome subunits. Functions at successive maturation steps to remove ribosomal factors at critical transition points, first driving the exit of early pre-60S particles from the nucleolus and then driving late pre-60S particles from the nucleus. At an early stage in 60S maturation, mediates the dissociation of the NOP7 complex (YTM1-ERB1-NOP7) from early pre-60S particles, rendering them competent for export from the nucleolus to the nucleoplasm. Subsequently recruited to the nucleoplasmic particles through interaction with the RIX1 complex. This binding is only possible if the 5S RNP at the central protuberance has undergone the rotation to complete its maturation. After remodeling, removes the ribosome biogenesis factor RSA4 in an ATP hydrolysis-driven step from pre-60S ribosomal subunits, rendering them competent for export from the nucleoplasm to the cytoplasm. Activates the GTPase activity of NOG2, which disengages from the pre-60S particle upon GTP hydrolysis, thus freeing its binding site for the nuclear export factor NMD3. The chain is Midasin (MDN1) from Saccharomyces cerevisiae (strain ATCC 204508 / S288c) (Baker's yeast).